A 409-amino-acid chain; its full sequence is Multifunctional CCA protein (409 aa).

ATP-binding residues include Gly8 and Arg11. Positions 8 and 11 each coordinate CTP. Mg(2+) is bound by residues Asp21 and Asp23. The ATP site is built by Arg91, Arg137, and Arg140. The CTP site is built by Arg91, Arg137, and Arg140. The HD domain maps to 228 to 329 (SGLHTLSVLE…LELLQSFDVY (102 aa)).

This sequence belongs to the tRNA nucleotidyltransferase/poly(A) polymerase family. Bacterial CCA-adding enzyme type 1 subfamily. In terms of assembly, monomer. Can also form homodimers and oligomers. Mg(2+) serves as cofactor. Requires Ni(2+) as cofactor.

The catalysed reaction is a tRNA precursor + 2 CTP + ATP = a tRNA with a 3' CCA end + 3 diphosphate. The enzyme catalyses a tRNA with a 3' CCA end + 2 CTP + ATP = a tRNA with a 3' CCACCA end + 3 diphosphate. Its function is as follows. Catalyzes the addition and repair of the essential 3'-terminal CCA sequence in tRNAs without using a nucleic acid template. Adds these three nucleotides in the order of C, C, and A to the tRNA nucleotide-73, using CTP and ATP as substrates and producing inorganic pyrophosphate. tRNA 3'-terminal CCA addition is required both for tRNA processing and repair. Also involved in tRNA surveillance by mediating tandem CCA addition to generate a CCACCA at the 3' terminus of unstable tRNAs. While stable tRNAs receive only 3'-terminal CCA, unstable tRNAs are marked with CCACCA and rapidly degraded. The polypeptide is Multifunctional CCA protein (Pseudomonas fluorescens (strain Pf0-1)).